The primary structure comprises 790 residues: MRMLRWLILSAFSVAGAVQAQGNQDSAAASAPSASIGAPVLRTSPGLRVHRLPDEKIPAFMEADQISGDPDSEVTLTGNAQVRRVDGIIKGDRINYRRDTGDVDVQGSARMLRDGTLITGPSARLNVDTYSGEIQEPNFWIGASGGTAQARHADIFSKSQMRLSQVTYSGCPCPKPSWYIKADTVDLDFDENEGVARNGVLYFKDVPILASPYLTFPVKKERKSGFLMPTYGTTSNSGFDISLPYYFNLAPNYDLTLVPRYLSKRGAQLGGEFRYLGSGYRGVAIGTYLPDDNETGRDRWMYRTYHRQLLGNGFYTDWDIAGASDDNYFRDISELGLNTASTTYLPRRGRVGWSSTYWQTYAQVYKYQTLQDPDAPLAPPYDKVPELWLKGARYDWGGFDAEWVSTAVRFQRPLLNGRRLGPDGDRLQTYPTVSYPIVRPGWFLVPKVGVHYTQYRTDWYNRDWNRIGLSNYKRTESRTVPIMSLDAGMIFERDASLFGKAATQTLEPRLYYLRVPYRDQSALPVYDTTLADFSFDQAFQENIYTGGWDRIANANQLTAALTTRWLDANTGFERLSLSAAQRIYFQDQEVTLPAEQPRKNVRSDFLVGATAALTDTLTTDVAAQYNPYDNKWSRGMVSARWSPQRLTTVAVAYRYQRDPLPGISYQPQGQNQVSLAVQWPIHRRWYGVGRVDYSLRSEPATAAAAEQSPRVTQAIAGLEYKGDCCWVGRVVYQRYAVSAADTNTALFFQLELTGLGALGTDPISLLNRSIPGYQSVVPPTPTGTTFERYE.

The N-terminal stretch at M1–A20 is a signal peptide.

It belongs to the LptD family. Component of the lipopolysaccharide transport and assembly complex. Interacts with LptE and LptA.

The protein resides in the cell outer membrane. Together with LptE, is involved in the assembly of lipopolysaccharide (LPS) at the surface of the outer membrane. This chain is LPS-assembly protein LptD, found in Bordetella bronchiseptica (strain ATCC BAA-588 / NCTC 13252 / RB50) (Alcaligenes bronchisepticus).